Reading from the N-terminus, the 113-residue chain is MHELSLCMSAADIIREQAEQHGIARVTDVWLEVGALADVEESALHFCFDIACRDTVAQGCTLHIDVIPAQAWCWDCSREAEIMQHAGCCPHCGSERLRISEGDDLRVKSLEGE.

Residues His2 and Glu3 each coordinate Ni(2+). 4 residues coordinate Zn(2+): Cys73, Cys76, Cys89, and Cys92.

Belongs to the HypA/HybF family. HybF subfamily.

Involved in the maturation of [NiFe] hydrogenases. Required for nickel insertion into the metal center of the hydrogenase. This chain is Hydrogenase maturation factor HybF, found in Morganella morganii (Proteus morganii).